The following is a 490-amino-acid chain: Glutamyl-tRNA(Gln) amidotransferase subunit A (490 aa).

Active-site charge relay system residues include Lys-78 and Ser-153. Ser-177 serves as the catalytic Acyl-ester intermediate.

The protein belongs to the amidase family. GatA subfamily. As to quaternary structure, heterotrimer of A, B and C subunits.

The catalysed reaction is L-glutamyl-tRNA(Gln) + L-glutamine + ATP + H2O = L-glutaminyl-tRNA(Gln) + L-glutamate + ADP + phosphate + H(+). Functionally, allows the formation of correctly charged Gln-tRNA(Gln) through the transamidation of misacylated Glu-tRNA(Gln) in organisms which lack glutaminyl-tRNA synthetase. The reaction takes place in the presence of glutamine and ATP through an activated gamma-phospho-Glu-tRNA(Gln). In Bdellovibrio bacteriovorus (strain ATCC 15356 / DSM 50701 / NCIMB 9529 / HD100), this protein is Glutamyl-tRNA(Gln) amidotransferase subunit A.